Consider the following 594-residue polypeptide: Aspartate--tRNA(Asp/Asn) ligase (594 aa).

Residue Glu-175 coordinates L-aspartate. Residues 199-202 (QQLK) are aspartate. Position 221 (Arg-221) interacts with L-aspartate. ATP-binding positions include 221 to 223 (RDE) and Gln-230. His-450 lines the L-aspartate pocket. ATP is bound at residue Glu-485. Arg-492 contacts L-aspartate. 537–540 (GIDR) lines the ATP pocket.

The protein belongs to the class-II aminoacyl-tRNA synthetase family. Type 1 subfamily. In terms of assembly, homodimer.

Its subcellular location is the cytoplasm. The enzyme catalyses tRNA(Asx) + L-aspartate + ATP = L-aspartyl-tRNA(Asx) + AMP + diphosphate. Its function is as follows. Aspartyl-tRNA synthetase with relaxed tRNA specificity since it is able to aspartylate not only its cognate tRNA(Asp) but also tRNA(Asn). Reaction proceeds in two steps: L-aspartate is first activated by ATP to form Asp-AMP and then transferred to the acceptor end of tRNA(Asp/Asn). This chain is Aspartate--tRNA(Asp/Asn) ligase, found in Herpetosiphon aurantiacus (strain ATCC 23779 / DSM 785 / 114-95).